Consider the following 487-residue polypeptide: Betaine aldehyde dehydrogenase (487 aa).

K(+) contacts are provided by S26 and D93. An NAD(+)-binding site is contributed by 150–152; that stretch reads GAW. Catalysis depends on K162, which acts as the Charge relay system. NAD(+) contacts are provided by residues 176–179 and 229–232; these read KPSE and SVPT. L244 serves as a coordination point for K(+). E250 (proton acceptor) is an active-site residue. G252, C284, and E384 together coordinate NAD(+). The Nucleophile role is filled by C284. C284 carries the post-translational modification Cysteine sulfenic acid (-SOH). Residues K454 and G457 each contribute to the K(+) site. Catalysis depends on E461, which acts as the Charge relay system.

The protein belongs to the aldehyde dehydrogenase family. In terms of assembly, dimer of dimers. The cofactor is K(+).

The enzyme catalyses betaine aldehyde + NAD(+) + H2O = glycine betaine + NADH + 2 H(+). Its pathway is amine and polyamine biosynthesis; betaine biosynthesis via choline pathway; betaine from betaine aldehyde: step 1/1. In terms of biological role, involved in the biosynthesis of the osmoprotectant glycine betaine. Catalyzes the irreversible oxidation of betaine aldehyde to the corresponding acid. This is Betaine aldehyde dehydrogenase from Rhizobium etli (strain CIAT 652).